The following is a 196-amino-acid chain: Xanthine phosphoribosyltransferase (196 aa).

Xanthine is bound by residues Leu20 and Asn27. 128 to 132 is a binding site for 5-phospho-alpha-D-ribose 1-diphosphate; it reads ATGAA. Residue Lys156 participates in xanthine binding.

It belongs to the purine/pyrimidine phosphoribosyltransferase family. Xpt subfamily. Homodimer.

It is found in the cytoplasm. The catalysed reaction is XMP + diphosphate = xanthine + 5-phospho-alpha-D-ribose 1-diphosphate. It participates in purine metabolism; XMP biosynthesis via salvage pathway; XMP from xanthine: step 1/1. Converts the preformed base xanthine, a product of nucleic acid breakdown, to xanthosine 5'-monophosphate (XMP), so it can be reused for RNA or DNA synthesis. The chain is Xanthine phosphoribosyltransferase from Brevibacillus brevis (strain 47 / JCM 6285 / NBRC 100599).